The chain runs to 138 residues: Transcription antitermination protein NusB (138 aa).

It belongs to the NusB family.

Involved in transcription antitermination. Required for transcription of ribosomal RNA (rRNA) genes. Binds specifically to the boxA antiterminator sequence of the ribosomal RNA (rrn) operons. This chain is Transcription antitermination protein NusB, found in Geobacter sulfurreducens (strain ATCC 51573 / DSM 12127 / PCA).